Consider the following 467-residue polypeptide: Actinorhodin polyketide putative beta-ketoacyl synthase 1 (467 aa).

Positions M1–T35 are disordered. The Ketosynthase family 3 (KS3) domain occupies K45 to D459. Catalysis depends on for beta-ketoacyl synthase activity residues C212, H352, and H389.

The protein belongs to the thiolase-like superfamily. Beta-ketoacyl-ACP synthases family.

Its pathway is antibiotic biosynthesis; actinorhodin biosynthesis. The sequence is that of Actinorhodin polyketide putative beta-ketoacyl synthase 1 from Streptomyces coelicolor (strain ATCC BAA-471 / A3(2) / M145).